The sequence spans 354 residues: Probable RNA methyltransferase AZOSEA28700 (354 aa).

Residue glutamate 88 is the Proton acceptor of the active site. The Radical SAM core domain occupies 91-317; sequence LLPRDGLCVS…TKLRHSAGQD (227 aa). Cysteine 98 and cysteine 322 are oxidised to a cystine. [4Fe-4S] cluster is bound by residues cysteine 105, cysteine 109, and cysteine 112. Residues 150-151, serine 180, 203-205, and asparagine 279 contribute to the S-adenosyl-L-methionine site; these read GE and SLH. The S-methylcysteine intermediate role is filled by cysteine 322.

Belongs to the radical SAM superfamily. RlmN family. It depends on [4Fe-4S] cluster as a cofactor.

The protein localises to the cytoplasm. The polypeptide is Probable RNA methyltransferase AZOSEA28700 (Aromatoleum aromaticum (strain DSM 19018 / LMG 30748 / EbN1) (Azoarcus sp. (strain EbN1))).